The sequence spans 333 residues: Protein FanF (333 aa).

Residues 1-22 (MKNKYNLLFFLFLLCYGDVALA) form the signal peptide.

Three disulfide bonds are present.

Its subcellular location is the fimbrium. Its function is as follows. Minor component of K99 fimbriae. Is not required for binding of K99 fimbriae to the ganglioside receptor. May play a role in initiation, elongation and flexibility of the fimbriae. The sequence is that of Protein FanF (fanF) from Escherichia coli.